A 450-amino-acid polypeptide reads, in one-letter code: tRNA (guanine-N(7)-)-methyltransferase non-catalytic subunit TRM82 (450 aa).

Residues 69 to 82 show a composition bias toward basic and acidic residues; sequence AAKKLKTNEGEAIE. Residues 69–103 form a disordered region; sequence AAKKLKTNEGEAIERPGNQRRVPLPGKDPKVPVPG. WD repeat units lie at residues 108–147, 200–241, and 245–285; these read PVYQ…KDNC, GHVS…VIDK, and GHKE…LMSS.

The protein belongs to the WD repeat TRM82 family. In terms of assembly, forms a heterodimer with the catalytic subunit TRM8.

It localises to the nucleus. Its pathway is tRNA modification; N(7)-methylguanine-tRNA biosynthesis. Required for the formation of N(7)-methylguanine at position 46 (m7G46) in tRNA. In the complex, it is required to stabilize and induce conformational changes of the catalytic subunit. In Eremothecium gossypii (strain ATCC 10895 / CBS 109.51 / FGSC 9923 / NRRL Y-1056) (Yeast), this protein is tRNA (guanine-N(7)-)-methyltransferase non-catalytic subunit TRM82.